The following is a 221-amino-acid chain: Small ribosomal subunit protein uS3c (221 aa).

The 79-residue stretch at 43–121 (IQNYIQKNMR…KLKIAITKIA (79 aa)) folds into the KH type-2 domain.

Belongs to the universal ribosomal protein uS3 family. Part of the 30S ribosomal subunit.

It localises to the plastid. The protein resides in the chloroplast. This chain is Small ribosomal subunit protein uS3c (rps3), found in Jasminum nudiflorum (Winter jasmine).